The chain runs to 882 residues: Valine--tRNA ligase (882 aa).

Residues P52 to H62 carry the 'HIGH' region motif. The 'KMSKS' region signature appears at K539–S543. K542 lines the ATP pocket. The stretch at I816–Q882 forms a coiled coil.

This sequence belongs to the class-I aminoacyl-tRNA synthetase family. ValS type 1 subfamily. As to quaternary structure, monomer.

Its subcellular location is the cytoplasm. It catalyses the reaction tRNA(Val) + L-valine + ATP = L-valyl-tRNA(Val) + AMP + diphosphate. Catalyzes the attachment of valine to tRNA(Val). As ValRS can inadvertently accommodate and process structurally similar amino acids such as threonine, to avoid such errors, it has a 'posttransfer' editing activity that hydrolyzes mischarged Thr-tRNA(Val) in a tRNA-dependent manner. The protein is Valine--tRNA ligase of Mycolicibacterium paratuberculosis (strain ATCC BAA-968 / K-10) (Mycobacterium paratuberculosis).